Reading from the N-terminus, the 276-residue chain is Large ribosomal subunit protein uL2 (276 aa).

Positions 224-276 are disordered; it reads VAMNPVDHPHGGGEGKTGEGRVPVSPWGTPTKGYRTRRNKRTTSMIVQRRQKR. The span at 230-242 shows a compositional bias: basic and acidic residues; the sequence is DHPHGGGEGKTGE.

Belongs to the universal ribosomal protein uL2 family. In terms of assembly, part of the 50S ribosomal subunit. Forms a bridge to the 30S subunit in the 70S ribosome.

One of the primary rRNA binding proteins. Required for association of the 30S and 50S subunits to form the 70S ribosome, for tRNA binding and peptide bond formation. It has been suggested to have peptidyltransferase activity; this is somewhat controversial. Makes several contacts with the 16S rRNA in the 70S ribosome. This chain is Large ribosomal subunit protein uL2, found in Polynucleobacter asymbioticus (strain DSM 18221 / CIP 109841 / QLW-P1DMWA-1) (Polynucleobacter necessarius subsp. asymbioticus).